The sequence spans 528 residues: Membrane protein insertase YidC (528 aa).

The next 4 membrane-spanning stretches (helical) occupy residues 5–25, 346–366, 416–436, and 486–506; these read VVIA…IFPP, YGIA…PLTH, LPMI…MFSI, and MLAL…GLVL.

This sequence belongs to the OXA1/ALB3/YidC family. Type 1 subfamily. As to quaternary structure, interacts with the Sec translocase complex via SecD. Specifically interacts with transmembrane segments of nascent integral membrane proteins during membrane integration.

It is found in the cell inner membrane. In terms of biological role, required for the insertion and/or proper folding and/or complex formation of integral membrane proteins into the membrane. Involved in integration of membrane proteins that insert both dependently and independently of the Sec translocase complex, as well as at least some lipoproteins. Aids folding of multispanning membrane proteins. This Geotalea uraniireducens (strain Rf4) (Geobacter uraniireducens) protein is Membrane protein insertase YidC.